The sequence spans 397 residues: 1-deoxy-D-xylulose 5-phosphate reductoisomerase (397 aa).

8 residues coordinate NADPH: threonine 12, glycine 13, serine 14, isoleucine 15, glycine 38, lysine 39, asparagine 40, and asparagine 126. A 1-deoxy-D-xylulose 5-phosphate-binding site is contributed by lysine 127. Glutamate 128 provides a ligand contact to NADPH. Aspartate 152 is a binding site for Mn(2+). Serine 153, glutamate 154, serine 188, and histidine 211 together coordinate 1-deoxy-D-xylulose 5-phosphate. Glutamate 154 contacts Mn(2+). Glycine 217 is a binding site for NADPH. Residues serine 224, asparagine 229, lysine 230, and glutamate 233 each coordinate 1-deoxy-D-xylulose 5-phosphate. Glutamate 233 is a Mn(2+) binding site.

The protein belongs to the DXR family. Requires Mg(2+) as cofactor. Mn(2+) serves as cofactor.

The catalysed reaction is 2-C-methyl-D-erythritol 4-phosphate + NADP(+) = 1-deoxy-D-xylulose 5-phosphate + NADPH + H(+). Its pathway is isoprenoid biosynthesis; isopentenyl diphosphate biosynthesis via DXP pathway; isopentenyl diphosphate from 1-deoxy-D-xylulose 5-phosphate: step 1/6. Its function is as follows. Catalyzes the NADPH-dependent rearrangement and reduction of 1-deoxy-D-xylulose-5-phosphate (DXP) to 2-C-methyl-D-erythritol 4-phosphate (MEP). The protein is 1-deoxy-D-xylulose 5-phosphate reductoisomerase of Haemophilus influenzae (strain 86-028NP).